Reading from the N-terminus, the 175-residue chain is Sec-independent protein translocase protein TatB (175 aa).

A helical membrane pass occupies residues Met-1–Gly-21. The segment covering Gly-99–Asp-115 has biased composition (low complexity). Residues Gly-99–Ser-118 are disordered.

Belongs to the TatB family. As to quaternary structure, the Tat system comprises two distinct complexes: a TatABC complex, containing multiple copies of TatA, TatB and TatC subunits, and a separate TatA complex, containing only TatA subunits. Substrates initially bind to the TatABC complex, which probably triggers association of the separate TatA complex to form the active translocon.

Its subcellular location is the cell inner membrane. Part of the twin-arginine translocation (Tat) system that transports large folded proteins containing a characteristic twin-arginine motif in their signal peptide across membranes. Together with TatC, TatB is part of a receptor directly interacting with Tat signal peptides. TatB may form an oligomeric binding site that transiently accommodates folded Tat precursor proteins before their translocation. The sequence is that of Sec-independent protein translocase protein TatB from Burkholderia thailandensis (strain ATCC 700388 / DSM 13276 / CCUG 48851 / CIP 106301 / E264).